We begin with the raw amino-acid sequence, 101 residues long: Small ribosomal subunit protein uS14 (101 aa).

It belongs to the universal ribosomal protein uS14 family. Part of the 30S ribosomal subunit. Contacts proteins S3 and S10.

In terms of biological role, binds 16S rRNA, required for the assembly of 30S particles and may also be responsible for determining the conformation of the 16S rRNA at the A site. The sequence is that of Small ribosomal subunit protein uS14 from Shewanella halifaxensis (strain HAW-EB4).